We begin with the raw amino-acid sequence, 179 residues long: Adenine phosphoribosyltransferase (179 aa).

The protein belongs to the purine/pyrimidine phosphoribosyltransferase family. Homodimer.

The protein resides in the cytoplasm. The enzyme catalyses AMP + diphosphate = 5-phospho-alpha-D-ribose 1-diphosphate + adenine. The protein operates within purine metabolism; AMP biosynthesis via salvage pathway; AMP from adenine: step 1/1. Catalyzes a salvage reaction resulting in the formation of AMP, that is energically less costly than de novo synthesis. The protein is Adenine phosphoribosyltransferase of Nitrobacter winogradskyi (strain ATCC 25391 / DSM 10237 / CIP 104748 / NCIMB 11846 / Nb-255).